A 218-amino-acid polypeptide reads, in one-letter code: Ras-related protein Rab-27B (218 aa).

Position 2 is an N-acetylthreonine (Thr2). 16-24 lines the GTP pocket; the sequence is GDSGVGKTT. The Effector region signature appears at 38 to 46; sequence FITTVGIDF. Residues 74–78, 133–136, and 163–165 contribute to the GTP site; these read DTAGQ, NKAD, and SAA. A disulfide bridge connects residues Cys123 and Cys188. Residues Cys216 and Cys218 are each lipidated (S-geranylgeranyl cysteine). Cys218 bears the Cysteine methyl ester mark.

It belongs to the small GTPase superfamily. Rab family. In terms of assembly, interacts with SYTL2, SYTL4, MYRIP and MLPH. Interacts with RPH3A and RPH3A. Interacts (GDP-bound form preferentially) with DENND10.

The protein localises to the membrane. It is found in the late endosome. The catalysed reaction is GTP + H2O = GDP + phosphate + H(+). Its activity is regulated as follows. Regulated by guanine nucleotide exchange factors (GEFs) which promote the exchange of bound GDP for free GTP, GTPase activating proteins (GAPs) which increase the GTP hydrolysis activity, and GDP dissociation inhibitors which inhibit the dissociation of the nucleotide from the GTPase. Activated by GEFs such as DENND10. Small GTPase which cycles between active GTP-bound and inactive GDP-bound states. In its active state, binds to a variety of effector proteins to regulate homeostasis of late endocytic pathway, including endosomal positioning, maturation and secretion. Plays a role in NTRK2/TRKB axonal anterograde transport by facilitating the association of NTRK2/TRKB with KLC1. May be involved in targeting uroplakins to urothelial apical membranes. This Rattus norvegicus (Rat) protein is Ras-related protein Rab-27B (Rab27b).